We begin with the raw amino-acid sequence, 301 residues long: uncharacterized protein (301 aa).

This sequence belongs to the asfivirus E301R family. As to quaternary structure, interacts with host IRF3.

In terms of biological role, plays a role in the inhibition of host innate immune system by acting as a negatively regulator of type I interferon production. Mechanistically, interacts with and prevents host IRF3 nuclear localization to inhibit its transcriptional activity. This is an uncharacterized protein from African swine fever virus (isolate Pig/Kenya/KEN-50/1950) (ASFV).